Consider the following 89-residue polypeptide: Small ribosomal subunit protein uS15 (89 aa).

This sequence belongs to the universal ribosomal protein uS15 family. Part of the 30S ribosomal subunit. Forms a bridge to the 50S subunit in the 70S ribosome, contacting the 23S rRNA.

In terms of biological role, one of the primary rRNA binding proteins, it binds directly to 16S rRNA where it helps nucleate assembly of the platform of the 30S subunit by binding and bridging several RNA helices of the 16S rRNA. Functionally, forms an intersubunit bridge (bridge B4) with the 23S rRNA of the 50S subunit in the ribosome. This Methylocella silvestris (strain DSM 15510 / CIP 108128 / LMG 27833 / NCIMB 13906 / BL2) protein is Small ribosomal subunit protein uS15.